Reading from the N-terminus, the 397-residue chain is uncharacterized protein (397 aa).

This is an uncharacterized protein from Thermotoga maritima (strain ATCC 43589 / DSM 3109 / JCM 10099 / NBRC 100826 / MSB8).